The sequence spans 506 residues: MKEYRVYLERARSRQQDFLYPLIFREYIYGLAYSHNFNRSIFVENGGYDNKYSLLNVKRLITRMYQQNHLIISANDSNKNPFLGYNKNFYSQIISEGFAIVVEIPFFLQLSSSLEEAEIIKSYKNLRSIHSVFPFLEDKFTYLNYVSDIRIPYPIHLEILVQILRYWVKDVPFFHLLRLFLYHFCNWNCFIPTKKSISTFSKSNPRLFLFLYNFYVCEYESIFLFLRNKSYHLRLKSFSVFFERIFFYAKREHLVEVFSKDFSYTLPFFKDPNIHYVRYQGKCILASKNVPFLMNKWKYYFIHLWQCFFDVWSQPRTININQLSEHSFQLLGYFSNVRLNRSVVRSQMLQNTFLIEIVSKKLDIIVPIIPLIRSLAKAKFCNVLGHPISKPVWADSSDFDIIERFLRICRNLSHYYNGSSKKKSLYRIKYILRLSCIKTLACKHKSTVRAFLKRSGSEELLEEFFTEEEEILSLIFPRDSFTLHRFHRNRIWYLDILFNNDLVNDE.

Belongs to the intron maturase 2 family. MatK subfamily.

Its subcellular location is the plastid. The protein localises to the chloroplast. In terms of biological role, usually encoded in the trnK tRNA gene intron. Probably assists in splicing its own and other chloroplast group II introns. The chain is Maturase K from Trifolium gracilentum (Pinpoint clover).